The following is a 346-amino-acid chain: Cytosolic sulfotransferase 17 (346 aa).

89 to 94 (KTGTTW) provides a ligand contact to 3'-phosphoadenylyl sulfate. The active-site Proton acceptor is histidine 151. Residues arginine 173, serine 181, tyrosine 239, and 309–311 (RKG) each bind 3'-phosphoadenylyl sulfate.

It belongs to the sulfotransferase 1 family. Highly expressed in roots, stems and mature leaves. Low expression in young leaves and flowers. Barely detected in siliques.

It is found in the cytoplasm. The catalysed reaction is an aliphatic (Z)-desulfo-glucosinolate + 3'-phosphoadenylyl sulfate = a (Z)-omega-(methylsulfanyl)-N-sulfo-alkylhydroximate S-glucoside + adenosine 3',5'-bisphosphate + H(+). Inhibited by phosphoadenosine 5'-phosphate (PAP). In terms of biological role, sulfotransferase that utilizes 3'-phospho-5'-adenylyl sulfate (PAPS) as sulfonate donor to catalyze the sulfate conjugation of desulfo-glucosinolates (dsGSs), the final step in the biosynthesis of the glucosinolate core structure. Substrate preference is desulfo-benzyl glucosinolate &gt; desulfo-6-methylthiohexyl glucosinolate. Increased specific activity with increasing chain length of desulfo-glucosinolate derived from methionine. Preferred substrate is desulfo-8-methylthiooctyl glucosinolate. This chain is Cytosolic sulfotransferase 17 (SOT17), found in Arabidopsis thaliana (Mouse-ear cress).